The primary structure comprises 459 residues: Pup--protein ligase (459 aa).

Glutamate 9 is a binding site for Mg(2+). Arginine 54 serves as a coordination point for ATP. Tyrosine 56 contributes to the Mg(2+) binding site. Aspartate 58 functions as the Proton acceptor in the catalytic mechanism. Glutamate 64 provides a ligand contact to Mg(2+). ATP-binding residues include threonine 67 and tryptophan 421.

Belongs to the Pup ligase/Pup deamidase family. Pup-conjugating enzyme subfamily.

It carries out the reaction ATP + [prokaryotic ubiquitin-like protein]-L-glutamate + [protein]-L-lysine = ADP + phosphate + N(6)-([prokaryotic ubiquitin-like protein]-gamma-L-glutamyl)-[protein]-L-lysine.. It functions in the pathway protein degradation; proteasomal Pup-dependent pathway. It participates in protein modification; protein pupylation. In terms of biological role, catalyzes the covalent attachment of the prokaryotic ubiquitin-like protein modifier Pup to the proteasomal substrate proteins, thereby targeting them for proteasomal degradation. This tagging system is termed pupylation. The ligation reaction involves the side-chain carboxylate of the C-terminal glutamate of Pup and the side-chain amino group of a substrate lysine. The chain is Pup--protein ligase from Jonesia denitrificans (strain ATCC 14870 / DSM 20603 / BCRC 15368 / CIP 55.134 / JCM 11481 / NBRC 15587 / NCTC 10816 / Prevot 55134) (Listeria denitrificans).